Reading from the N-terminus, the 428-residue chain is D-serine dehydratase (428 aa).

K57 bears the N6-(pyridoxal phosphate)lysine mark. The pyridoxal 5'-phosphate site is built by Y203, Y210, T255, G286, and N287. Zn(2+) is bound by residues H398 and C400.

Belongs to the DSD1 family. As to quaternary structure, homodimer. Pyridoxal 5'-phosphate serves as cofactor. It depends on Zn(2+) as a cofactor.

It carries out the reaction D-serine = pyruvate + NH4(+). With respect to regulation, sodium cyanoborohydride, N-ethylmaleimide, hydroxylamine, phenyhydrazin and EDTA are inhibitors of the catalytic activity. Functionally, catalyzes the conversion of D-serine to pyruvate and ammonia. May play a role in D-serine detoxification. The polypeptide is D-serine dehydratase (Saccharomyces cerevisiae (strain ATCC 204508 / S288c) (Baker's yeast)).